Here is a 396-residue protein sequence, read N- to C-terminus: ATP-dependent RNA helicase eIF4A (396 aa).

The short motif at 22-50 (HKFDELKLKEVLLRGIYGYGFVDPSAIQQ) is the Q motif element. The Helicase ATP-binding domain occupies 53–223 (ILPIIEGHDV…DKFMNKPVRI (171 aa)). 66–73 (AQSGTGKT) contributes to the ATP binding site. The short motif at 171 to 174 (DEAD) is the DEAD box element. The Helicase C-terminal domain maps to 234–395 (GIQQYYINVE…ELPANIADLF (162 aa)).

It belongs to the DEAD box helicase family. eIF4A subfamily. In terms of assembly, component of the eIF4F complex, which composition varies with external and internal environmental conditions. It is composed of at least eIF4A, eIF4E and eIF4G.

Its subcellular location is the cytoplasm. It catalyses the reaction ATP + H2O = ADP + phosphate + H(+). ATP-dependent RNA helicase which is a subunit of the eIF4F complex involved in cap recognition and is required for mRNA binding to ribosome. In the current model of translation initiation, eIF4A unwinds RNA secondary structures in the 5'-UTR of mRNAs which is necessary to allow efficient binding of the small ribosomal subunit, and subsequent scanning for the initiator codon. The sequence is that of ATP-dependent RNA helicase eIF4A (TIF1) from Eremothecium gossypii (strain ATCC 10895 / CBS 109.51 / FGSC 9923 / NRRL Y-1056) (Yeast).